The following is a 492-amino-acid chain: Catalase (492 aa).

Catalysis depends on residues H65 and N138. Y348 serves as a coordination point for heme.

The protein belongs to the catalase family. In terms of assembly, homotetramer. Heme is required as a cofactor.

Its subcellular location is the cytoplasm. The protein resides in the cytosol. It is found in the peroxisome matrix. The enzyme catalyses 2 H2O2 = O2 + 2 H2O. Functionally, catalyzes the degradation of hydrogen peroxide (H(2)O(2)) generated by peroxisomal oxidases to water and oxygen, thereby protecting cells from the toxic effects of hydrogen peroxide. The chain is Catalase from Soldanella alpina (Alpine snowbell).